We begin with the raw amino-acid sequence, 365 residues long: Aminomethyltransferase (365 aa).

Belongs to the GcvT family. In terms of assembly, the glycine cleavage system is composed of four proteins: P, T, L and H.

The catalysed reaction is N(6)-[(R)-S(8)-aminomethyldihydrolipoyl]-L-lysyl-[protein] + (6S)-5,6,7,8-tetrahydrofolate = N(6)-[(R)-dihydrolipoyl]-L-lysyl-[protein] + (6R)-5,10-methylene-5,6,7,8-tetrahydrofolate + NH4(+). In terms of biological role, the glycine cleavage system catalyzes the degradation of glycine. In Erwinia tasmaniensis (strain DSM 17950 / CFBP 7177 / CIP 109463 / NCPPB 4357 / Et1/99), this protein is Aminomethyltransferase.